The primary structure comprises 576 residues: Sodium/hydrogen exchanger 8 (576 aa).

11 helical membrane-spanning segments follow: residues 55–75 (MTIF…HLLI), 79–99 (LHFL…GAVI), 118–138 (PNMF…YSLH), 151–171 (LFAV…IYFL), 186–206 (FAFG…IFNA), 256–276 (LGYF…TGLI), 306–326 (GLAE…GIVM), 349–369 (VAFL…FSFP), 374–394 (ISFV…NIFP), 412–432 (MFIM…SLHL), and 446–466 (TTIV…MPLI). At threonine 505 the chain carries Phosphothreonine. Phosphoserine occurs at positions 566 and 568.

The protein belongs to the monovalent cation:proton antiporter 1 (CPA1) transporter (TC 2.A.36) family. Predominantly expressed in the liver, skeletal muscle, kidney, and testis. Expressed in both renal cortex and medulla. Detected throughout the entire gastrointestinal tract, with high expression detected in stomach, duodenum and ascending colon. In gastric epithelium; expressed in the glands within the fundus and pylorus regions.

Its subcellular location is the golgi apparatus membrane. It is found in the golgi apparatus. The protein localises to the trans-Golgi network membrane. It localises to the endosome. The protein resides in the multivesicular body membrane. Its subcellular location is the apical cell membrane. It is found in the cytoplasmic vesicle. The protein localises to the secretory vesicle. It localises to the acrosome. The catalysed reaction is Na(+)(in) + H(+)(out) = Na(+)(out) + H(+)(in). In terms of biological role, na(+)/H(+) antiporter. Mediates the electoneutral exchange of intracellular H(+) ions for extracellular Na(+) in 1:1 stoichiometry. Acts as an Na(+)/H(+) exchanger in the trans-Golgi. Contributes to the regulation of pH regulation of Golgi apparatus, and consequently, in protein trafficking and endosomal morphology. Plays a crucial role in germ cells in acrosome biogenesis and sperm development, probably by playing a role in the fusion of the Golgi-derived vesicles that form the acrosomal cap. Can also be active at the cell surface of specialized cells. In the small intestine, plays a major physiological role in transepithelial absorption of Na(+). Regulates intracellular pH homeostasis of intestinal epithelial cells. Acts as an important regulator of mucosal integrity in the intestine and in the stomach, could mediate the pH fluctuation necessary for mucin exocytosis or assist membrane trafficking of other proteins. Plays a role in photoreceptor survival and in the maintenance of intracellular pH homeostasis in retinal pigment epithelium (RPE cells). This Mus musculus (Mouse) protein is Sodium/hydrogen exchanger 8 (Slc9a8).